The primary structure comprises 2295 residues: Protein DOP1B (2295 aa).

A phosphoserine mark is found at Ser-556 and Ser-597. Disordered stretches follow at residues 574 to 599 (AGDE…SSPE), 651 to 684 (GEEN…DPKP), 1034 to 1059 (CKEA…QFTT), and 1092 to 1136 (DLPD…LQDL). Polar residues predominate over residues 1111-1131 (ADTSSGHTDSENTSTFSSPSH). Ser-1167 is modified (phosphoserine).

Belongs to the DOP1 family. Homooligomer. Heterotrimer with ATP9A and MON2; this interaction is retromer-independent. Interacts with SNX3. In terms of tissue distribution, expressed in liver, heart and brain.

The protein localises to the early endosome membrane. The protein resides in the golgi apparatus membrane. Its function is as follows. May play a role in regulating membrane trafficking of cargo proteins. Together with ATP9A and MON2, regulates SNX3 retromer-mediated endosomal sorting of WLS away from lysosomal degradation. The sequence is that of Protein DOP1B (Dop1b) from Mus musculus (Mouse).